The following is a 275-amino-acid chain: Nitrogenase iron protein 1 (275 aa).

Position 9–16 (9–16 (GKGGIGKS)) interacts with ATP. C98 is a [4Fe-4S] cluster binding site. Residue R101 is modified to ADP-ribosylarginine; by dinitrogenase reductase ADP-ribosyltransferase. C132 serves as a coordination point for [4Fe-4S] cluster.

This sequence belongs to the NifH/BchL/ChlL family. Homodimer. [4Fe-4S] cluster serves as cofactor. The reversible ADP-ribosylation of Arg-101 inactivates the nitrogenase reductase and regulates nitrogenase activity.

The enzyme catalyses N2 + 8 reduced [2Fe-2S]-[ferredoxin] + 16 ATP + 16 H2O = H2 + 8 oxidized [2Fe-2S]-[ferredoxin] + 2 NH4(+) + 16 ADP + 16 phosphate + 6 H(+). In terms of biological role, the key enzymatic reactions in nitrogen fixation are catalyzed by the nitrogenase complex, which has 2 components: the iron protein and the molybdenum-iron protein. This Methanobacterium ivanovii protein is Nitrogenase iron protein 1 (nifH1).